The following is a 525-amino-acid chain: Probable malate:quinone oxidoreductase (525 aa).

Belongs to the MQO family. Requires FAD as cofactor.

The enzyme catalyses (S)-malate + a quinone = a quinol + oxaloacetate. It functions in the pathway carbohydrate metabolism; tricarboxylic acid cycle; oxaloacetate from (S)-malate (quinone route): step 1/1. This is Probable malate:quinone oxidoreductase from Serratia proteamaculans (strain 568).